We begin with the raw amino-acid sequence, 286 residues long: Serine carboxypeptidase-like (286 aa).

Ser4 is an active-site residue. Intrachain disulfides connect Cys83–Cys98 and Cys121–Cys126. Asp193 is a catalytic residue. Cys196 is a substrate binding site. Asn227 is a glycosylation site (N-linked (GlcNAc...) asparagine). His250 is an active-site residue.

Belongs to the peptidase S10 family.

Involved in degradation of small peptides. The sequence is that of Serine carboxypeptidase-like from Pisum sativum (Garden pea).